Here is a 149-residue protein sequence, read N- to C-terminus: Large ribosomal subunit protein uL15 (149 aa).

Residues 21 to 54 (RGSASGLGCTSGKGNKGQNARSGGGVRPGFEGGQ) form a disordered region. 2 stretches are compositionally biased toward gly residues: residues 23–35 (SASG…GKGN) and 42–52 (SGGGVRPGFEG).

Belongs to the universal ribosomal protein uL15 family. As to quaternary structure, part of the 50S ribosomal subunit.

In terms of biological role, binds to the 23S rRNA. This chain is Large ribosomal subunit protein uL15, found in Lawsonia intracellularis (strain PHE/MN1-00).